The chain runs to 350 residues: MPIKTRVLVVDDSALMRGLLSQMINLAPDMEVVGAAPDAQSAREMIKVLNPDVLTLDVQMPKMDGLEFLERLMRLRPMPVVMVSSFTEAGSDTTLKALELGAIDFIGKPRADGGRSVENYAEELVEKIRAAKAARLRRAMTGNSVRAATPASASPKSGLGASGKIIFVGASTGGTEAIKDFLLGIPADCPPILIVQHMPEAFTASFARRLDSLCAPRIIEAKGNEKVEPGTIYVAPGHSHLLIRRGTAGFLTELAATPPVNRHRPAVDVLFDSAATLVGRKAIGVILTGMGKDGAQGLLRMRQAGARTFGQDESSCVVYGMPREAFLIGAVEEQCSLDEMARRVLGAVSA.

The 118-residue stretch at 6–123 folds into the Response regulatory domain; sequence RVLVVDDSAL…GRSVENYAEE (118 aa). 4-aspartylphosphate is present on Asp57. Residues 159-350 enclose the CheB-type methylesterase domain; sequence LGASGKIIFV…ARRVLGAVSA (192 aa). Catalysis depends on residues Ser171, His197, and Asp293.

Belongs to the CheB family. Phosphorylated by CheA. Phosphorylation of the N-terminal regulatory domain activates the methylesterase activity.

It localises to the cytoplasm. It carries out the reaction [protein]-L-glutamate 5-O-methyl ester + H2O = L-glutamyl-[protein] + methanol + H(+). The catalysed reaction is L-glutaminyl-[protein] + H2O = L-glutamyl-[protein] + NH4(+). In terms of biological role, involved in chemotaxis. Part of a chemotaxis signal transduction system that modulates chemotaxis in response to various stimuli. Catalyzes the demethylation of specific methylglutamate residues introduced into the chemoreceptors (methyl-accepting chemotaxis proteins or MCP) by CheR. Also mediates the irreversible deamidation of specific glutamine residues to glutamic acid. This is Protein-glutamate methylesterase/protein-glutamine glutaminase 1 from Dechloromonas aromatica (strain RCB).